A 327-amino-acid polypeptide reads, in one-letter code: Vacuolar protein sorting-associated protein 26A (327 aa).

Residues 306–327 (RTNFHQRFESPDSQASAEQPEM) form a disordered region. Ser-315 is modified (phosphoserine). Over residues 316-327 (PDSQASAEQPEM) the composition is skewed to polar residues.

Belongs to the VPS26 family. Component of the heterotrimeric retromer cargo-selective complex (CSC), also described as vacuolar protein sorting subcomplex (VPS), formed by VPS26 (VPS26A or VPS26B), VPS29 and VPS35. The CSC has a highly elongated structure with VPS26 and VPS29 binding independently at opposite distal ends of VPS35 as central platform. The CSC is believed to associate with variable sorting nexins to form functionally distinct retromer complex variants. The originally described retromer complex (also called SNX-BAR retromer) is a pentamer containing the CSC and a heterodimeric membrane-deforming subcomplex formed between SNX1 or SNX2 and SNX5 or SNX6 (also called SNX-BAR subcomplex); the respective CSC and SNX-BAR subcomplexes associate with low affinity. The CSC associates with SNX3 to form a SNX3-retromer complex. The CSC associates with SNX27, the WASH complex and the SNX-BAR subcomplex to form the SNX27-retromer complex. Interacts with VPS29, VPS35, SNX27. Interacts with SNX1, SNX2, SNX5, SNX6, SNX3, RAB7A, ECPAS, EHD1, WASHC5, SORL1.

It is found in the cytoplasm. The protein localises to the endosome membrane. The protein resides in the early endosome. Functionally, acts as a component of the retromer cargo-selective complex (CSC). The CSC is believed to be the core functional component of retromer or respective retromer complex variants acting to prevent missorting of selected transmembrane cargo proteins into the lysosomal degradation pathway. The recruitment of the CSC to the endosomal membrane involves RAB7A and SNX3. The SNX-BAR retromer mediates retrograde transport of cargo proteins from endosomes to the trans-Golgi network (TGN) and is involved in endosome-to-plasma membrane transport for cargo protein recycling. The SNX3-retromer mediates the retrograde endosome-to-TGN transport of WLS distinct from the SNX-BAR retromer pathway. The SNX27-retromer is believed to be involved in endosome-to-plasma membrane trafficking and recycling of a broad spectrum of cargo proteins. The CSC complex seems to act as recruitment hub for other proteins, such as the WASH complex and TBC1D5. Required for retrograde transport of lysosomal enzyme receptor IGF2R. Required to regulate transcytosis of the polymeric immunoglobulin receptor (pIgR-pIgA). Required for the endosomal localization of WASHC2 (indicative for the WASH complex). Required for the endosomal localization of TBC1D5. Mediates retromer cargo recognition of SORL1 and is involved in trafficking of SORL1 implicated in sorting and processing of APP. Involved in retromer-independent lysosomal sorting of F2R. Involved in recycling of ADRB2. Acts redundantly with VSP26B in SNX-27 mediated endocytic recycling of SLC2A1/GLUT1. Enhances the affinity of SNX27 for PDZ-binding motifs in cargo proteins. The sequence is that of Vacuolar protein sorting-associated protein 26A (Vps26a) from Mus musculus (Mouse).